A 246-amino-acid polypeptide reads, in one-letter code: Allergin-1 (246 aa).

The first 33 residues, 1-33 (MGDGDSPMCLSAVSFKGIRCWLDKLLLWALTIS), serve as a signal peptide directing secretion. The Extracellular portion of the chain corresponds to 34–150 (ITLQNAAVDC…DESCPSCRLS (117 aa)). The 80-residue stretch at 52–131 (PSPNLNSSMN…VNVSNLMKYS (80 aa)) folds into the Ig-like C2-type domain. A glycan (N-linked (GlcNAc...) asparagine) is linked at Asn68. Cys73 and Cys120 form a disulfide bridge. The chain crosses the membrane as a helical span at residues 151–171 (LLLPGLLLGILVIVLVLAYLI). The Cytoplasmic portion of the chain corresponds to 172–246 (HLKYKKGKKT…ADYIYSELTH (75 aa)). Short sequence motifs (ITIM motif) lie at residues 214–219 (IHYATP) and 239–244 (YIYSEL). A phosphotyrosine mark is found at Tyr216 and Tyr241.

As to quaternary structure, monomer. Interacts (tyrosine-phosphorylated) with PTPN6, PTPN11 and INPP5D. N-glycosylated. In terms of tissue distribution, expressed in myeloid cells (dendritic cells, macrophages and neutrophils but not in T-cells, B-cells or natural killer cells) and mast cells (at protein level).

The protein localises to the cell membrane. The protein resides in the secreted. Its function is as follows. Immunoglobulin-like receptor which plays an inhibitory role in degranulation of mast cells. Negatively regulates IgE-mediated mast cell activation and suppresses the type I immediate hypersensitivity reaction. In Mus musculus (Mouse), this protein is Allergin-1 (Milr1).